Here is a 317-residue protein sequence, read N- to C-terminus: Carbonic anhydrase 5B, mitochondrial (317 aa).

The transit peptide at 1–33 directs the protein to the mitochondrion; sequence MTVMSHLRVSLQVSSCTLLWRRFRVPRLVPLRS. One can recognise an Alpha-carbonic anhydrase domain in the interval 37 to 296; that stretch reads YTCTYRTRNR…LMNRTVRSSF (260 aa). Residues His-130, His-132, and His-155 each contribute to the Zn(2+) site. Position 235–236 (235–236) interacts with substrate; sequence TT.

Belongs to the alpha-carbonic anhydrase family. The cofactor is Zn(2+).

Its subcellular location is the mitochondrion. The catalysed reaction is hydrogencarbonate + H(+) = CO2 + H2O. In terms of biological role, mitochondrial carbonic anhydrase that catalyzes the reversible conversion of carbon dioxide to bicarbonate/HCO3. This is Carbonic anhydrase 5B, mitochondrial (Ca5b) from Rattus norvegicus (Rat).